The following is a 326-amino-acid chain: MIRVKREFTVKENALRLDLYLSGNFEVFTRSQIKRRNVEAFKKSNGKFLKIKLSKPVFKDDEILIEFDEESSQIDCLRPSNIPIAIIYEDSNVIVLNKPQGILSHPGISHWDDTVVNFLLYHIKSLKINFNEEKIRPGIVHRLDKDTSGVLICAKNISTLRFLAQQFKDKRTNKVYIAIVKGNFNSFFGSIESFIDRDKHNRKKFSVSKDRGKKALTEYRLLLNFGEYSLLALKPKTGRTHQLRVHMKYLNFPILGDEVYGRVDGSLKKITLMLHSYKLEIDVGKNSFKKFISEFPKRFVIFLSNFYKSDELNLIIDNLVLFLRDF.

The active site involves Asp144.

The protein belongs to the pseudouridine synthase RluA family.

It localises to the cytoplasm. It carries out the reaction uridine(1911/1915/1917) in 23S rRNA = pseudouridine(1911/1915/1917) in 23S rRNA. Functionally, responsible for synthesis of pseudouridine from uracil at positions 1911, 1915 and 1917 in 23S ribosomal RNA. This chain is Ribosomal large subunit pseudouridine synthase D, found in Borreliella burgdorferi (strain ATCC 35210 / DSM 4680 / CIP 102532 / B31) (Borrelia burgdorferi).